The sequence spans 447 residues: Diaminopimelate decarboxylase (447 aa).

Lys72 carries the N6-(pyridoxal phosphate)lysine modification. Residues Gly258 and Glu300–Arg303 contribute to the pyridoxal 5'-phosphate site. Residues Arg303, Arg344, and Tyr348 each coordinate substrate. Residue Cys375 is the Proton donor of the active site. Residues Glu376 and Tyr405 each contribute to the substrate site. Tyr405 contacts pyridoxal 5'-phosphate.

Belongs to the Orn/Lys/Arg decarboxylase class-II family. LysA subfamily. As to quaternary structure, homodimer. The cofactor is pyridoxal 5'-phosphate.

The catalysed reaction is meso-2,6-diaminopimelate + H(+) = L-lysine + CO2. It participates in amino-acid biosynthesis; L-lysine biosynthesis via DAP pathway; L-lysine from DL-2,6-diaminopimelate: step 1/1. Functionally, specifically catalyzes the decarboxylation of meso-diaminopimelate (meso-DAP) to L-lysine. The protein is Diaminopimelate decarboxylase of Mycobacterium bovis (strain ATCC BAA-935 / AF2122/97).